The sequence spans 194 residues: Calcium channel flower (194 aa).

3 helical membrane-spanning segments follow: residues 35-55, 66-88, and 113-133; these read LGIVAAFFAILFGLWNVFSII, IIQMVAGFVVMLLEAPCCFVCFE, and AIPPIILCFGLASLFGSGLIF.

The protein belongs to the calcium channel flower family. Homomultimer. Associates with the dally/ magu complex.

The protein localises to the cytoplasmic vesicle. The protein resides in the secretory vesicle. Its subcellular location is the synaptic vesicle membrane. It is found in the presynaptic cell membrane. It localises to the endosome. With respect to regulation, channel activity is inhibited by La(3+), which reduces Ca(2+) influx and thus inhibits it's function in promoting activity-dependent bulk endocytosis (ADBE) in response to high stimuli. Its function is as follows. Transmembrane protein which mediates synaptic endocytosis, fitness-based cell culling, neuronal culling, morphogen gradient scaling, and calcium transport. Regulates synaptic endocytosis and hence couples exo- with endocytosis. Controls two major modes of synaptic vesicle (SV) endocytosis in the synaptic boutons of neuromuscular junctions (NMJs); Ca(2+) channel-independent Clathrin-mediated endocytosis (CME) in response to mild stimulation, and Ca(2+) channel-dependent activity-dependent bulk endocytosis (ADBE) in response to strong stimulation. Functions in ADBE and subsequent SV reformation from bulk endosomes by initiating Ca(2+) channel-dependent phosphatidylinositol 4,5-bisphosphate (PtdIns(4,5)P2) compartmentalization in synaptic boutons. There it acts at the periactive zone to provide the low Ca(2+) levels required to initiate Calcineurin activation and upregulate PtdIns(4,5)P2. Conversely PtdIns(4,5)P2 enhances fwe Ca(2+) channel-activity, establishing a positive feedback loop that induces PtdIns(4,5)P2 microdomain at the periactive zone. These microdomains trigger bulk membrane invagination (i.e. ADBE) by triggering actin polymerization while also promoting localization of fwe to bulk endosomes, thereby removing the ADBE trigger to reduce endocytosis and prevent excess membrane uptake. PtdIns(4,5)P2 then promotes SV reformation from the bulk endosomes, to coordinate ADBE and subsequent SV reformation. Different combinations of the flower isoforms at the cell membrane are also required for the identification and elimination of suboptimal or supernumerary cells during development, regeneration, and adulthood. Required for the recognition and elimination of unfit cells in the developing wing during cell competition. In the developing pupal retina, mediates the elimination of unwanted postmitotic neurons, including supernumerary photoreceptor neurons that form at the periphery of the retina and are contained within incomplete ommatidia units. Also required for efficient elimination and replacement of old neurons by newly generated neurons during regeneration in the adult brain following mechanical injury. Downstream of the flower fitness fingerprints, cells identified as unwanted or unfit are eliminated via apoptosis through the expression of ahuizotl (azot). However, the cells marked for elimination by the flower isoforms only undergo apoptosis if additional thresholds are met; (1) their neighboring fit/healthy cells express different levels of the fwe isoforms, and (2) the levels of the protective signal SPARC expressed by the loser or unwanted cells are unable to inhibit caspase activation. These additional thresholds for flower-mediated apoptosis, allows useful cells to recover from transient and limited stress before they are unnecessarily eliminated. Functions with dally and magu in a mechanism of scaling, which utilises apoptosis to ensure that the dpp morphogen gradient, which mediates organ growth, remains proportional to the size of the growing wing. In this mechanism, fwe represses dally- and Magu-dependent activity in expanding the gradient, and dally/Magu inhibits fwe-dependent apoptosis to keep cell death rate low. When the levels of these different proteins are optimally regulated the gradient correctly scales with organ growth but when this fails, fwe-mediated apoptosis is activated to trim the developing tissue to match the correct size of the gradient. In Drosophila yakuba (Fruit fly), this protein is Calcium channel flower.